Here is a 117-residue protein sequence, read N- to C-terminus: Large ribosomal subunit protein uL18 (117 aa).

This sequence belongs to the universal ribosomal protein uL18 family. As to quaternary structure, part of the 50S ribosomal subunit; part of the 5S rRNA/L5/L18/L25 subcomplex. Contacts the 5S and 23S rRNAs.

In terms of biological role, this is one of the proteins that bind and probably mediate the attachment of the 5S RNA into the large ribosomal subunit, where it forms part of the central protuberance. In Vibrio campbellii (strain ATCC BAA-1116), this protein is Large ribosomal subunit protein uL18.